Reading from the N-terminus, the 362-residue chain is 3-dehydroquinate synthase (362 aa).

NAD(+) contacts are provided by residues 71–76, 105–109, 129–130, Lys142, Lys151, and 169–172; these read DGEQYK, GVIGD, TT, and CLKT. Zn(2+) contacts are provided by Glu184, His247, and His264.

The protein belongs to the sugar phosphate cyclases superfamily. Dehydroquinate synthase family. Co(2+) is required as a cofactor. The cofactor is Zn(2+). It depends on NAD(+) as a cofactor.

The protein resides in the cytoplasm. The enzyme catalyses 7-phospho-2-dehydro-3-deoxy-D-arabino-heptonate = 3-dehydroquinate + phosphate. The protein operates within metabolic intermediate biosynthesis; chorismate biosynthesis; chorismate from D-erythrose 4-phosphate and phosphoenolpyruvate: step 2/7. Catalyzes the conversion of 3-deoxy-D-arabino-heptulosonate 7-phosphate (DAHP) to dehydroquinate (DHQ). The protein is 3-dehydroquinate synthase of Salmonella schwarzengrund (strain CVM19633).